A 490-amino-acid chain; its full sequence is GTPase Der (490 aa).

2 consecutive EngA-type G domains span residues proline 3–isoleucine 166 and isoleucine 203–threonine 376. GTP-binding positions include glycine 9–serine 16, aspartate 56–isoleucine 60, asparagine 118–aspartate 121, glycine 209–serine 216, aspartate 256–valine 260, and asparagine 321–aspartate 324. The KH-like domain occupies arginine 377 to glutamate 461.

The protein belongs to the TRAFAC class TrmE-Era-EngA-EngB-Septin-like GTPase superfamily. EngA (Der) GTPase family. Associates with the 50S ribosomal subunit.

GTPase that plays an essential role in the late steps of ribosome biogenesis. The polypeptide is GTPase Der (Enterobacter sp. (strain 638)).